Reading from the N-terminus, the 108-residue chain is Ig kappa chain V region BS-5 (108 aa).

A framework-1 region spans residues 1 to 23 (DVVMTQTPASVSEPVGGTVTIKC). 2 cysteine pairs are disulfide-bonded: cysteine 23–cysteine 88 and cysteine 80–glycine 108. Residues 24–34 (QASQSIYSNLA) are complementarity-determining-1. Residues 35–49 (WYQZKPGQPPKLLIY) form a framework-2 region. Residues 50 to 56 (KASTLES) are complementarity-determining-2. A framework-3 region spans residues 57–88 (GVPSRFKGSGSGTDFTLTISDLECADAATYFC). The interval 89-97 (QGSBYTGTV) is complementarity-determining-3. Positions 98 to 107 (FGGGTEVVVK) are framework-4.

In Oryctolagus cuniculus (Rabbit), this protein is Ig kappa chain V region BS-5.